The primary structure comprises 625 residues: DNA mismatch repair protein MutL (625 aa).

Belongs to the DNA mismatch repair MutL/HexB family.

Its function is as follows. This protein is involved in the repair of mismatches in DNA. It is required for dam-dependent methyl-directed DNA mismatch repair. May act as a 'molecular matchmaker', a protein that promotes the formation of a stable complex between two or more DNA-binding proteins in an ATP-dependent manner without itself being part of a final effector complex. The protein is DNA mismatch repair protein MutL of Xanthomonas axonopodis pv. citri (strain 306).